The following is a 401-amino-acid chain: MTTIGTPLSPSATKVMLLGSGELGKEVLIALQRLGVETIAVDRYDNAPGQQVAHHARTIAMSDPEQLKALIEAEKPQLVVPEIEAIATPMLESLEAAGVVRVIPTARAARLTMDREGIRRLAAETLGLPTSPYKFCDSLEELQTAIDGGIGYPCVVKPVMSSSGKGQSKIDGPEGVKAAWDYAMAGGRVSHGRVIVEGFIDFDYEITLLTVRALGADGKVETQFCTPIGHVQVSGDYVESWQPHPMHPAALQTAQHIARAVTSDLGGQGLFGVELFVKGEQVWFSEVSPRPHDTGMVTMATQWQNEFELHARAILGLPVSTALKSPGASAVIYGGVDAQGVVFDGVDAALRVPQTEVRLFGKPESFAKRRMGVALAYADDVDTARQRAKEAAACVKPRVAG.

N(1)-(5-phospho-beta-D-ribosyl)glycinamide is bound by residues 22 to 23 (EL) and Glu82. Residues Arg115, Lys157, 162–167 (SSGKGQ), 197–200 (EGFI), and Glu205 each bind ATP. An ATP-grasp domain is found at 120 to 315 (RLAAETLGLP…EFELHARAIL (196 aa)). The Mg(2+) site is built by Glu274 and Glu286. N(1)-(5-phospho-beta-D-ribosyl)glycinamide is bound by residues Asp293, Lys362, and 369-370 (RR).

Belongs to the PurK/PurT family. Homodimer.

It catalyses the reaction N(1)-(5-phospho-beta-D-ribosyl)glycinamide + formate + ATP = N(2)-formyl-N(1)-(5-phospho-beta-D-ribosyl)glycinamide + ADP + phosphate + H(+). It participates in purine metabolism; IMP biosynthesis via de novo pathway; N(2)-formyl-N(1)-(5-phospho-D-ribosyl)glycinamide from N(1)-(5-phospho-D-ribosyl)glycinamide (formate route): step 1/1. Its function is as follows. Involved in the de novo purine biosynthesis. Catalyzes the transfer of formate to 5-phospho-ribosyl-glycinamide (GAR), producing 5-phospho-ribosyl-N-formylglycinamide (FGAR). Formate is provided by PurU via hydrolysis of 10-formyl-tetrahydrofolate. The chain is Formate-dependent phosphoribosylglycinamide formyltransferase from Cupriavidus pinatubonensis (strain JMP 134 / LMG 1197) (Cupriavidus necator (strain JMP 134)).